The primary structure comprises 565 residues: CTP synthase (565 aa).

An amidoligase domain region spans residues 1–272 (MARPKNVKHI…DLRVMKKLGL (272 aa)). S18 provides a ligand contact to CTP. Residue S18 coordinates UTP. An ATP-binding site is contributed by 19–24 (SLGKGI). Y59 is an L-glutamine binding site. Residue D76 coordinates ATP. Mg(2+) is bound by residues D76 and E146. CTP contacts are provided by residues 153–155 (DIE), 193–198 (KTKPTQ), and K229. Residues 193–198 (KTKPTQ) and K229 each bind UTP. The region spanning 299 to 543 (TIGICGKYTE…VHAAKEFAQG (245 aa)) is the Glutamine amidotransferase type-1 domain. G363 is a binding site for L-glutamine. C390 acts as the Nucleophile; for glutamine hydrolysis in catalysis. L-glutamine contacts are provided by residues 391–394 (LGMQ), E414, and R471. Catalysis depends on residues H516 and E518.

It belongs to the CTP synthase family. In terms of assembly, homotetramer.

It carries out the reaction UTP + L-glutamine + ATP + H2O = CTP + L-glutamate + ADP + phosphate + 2 H(+). The enzyme catalyses L-glutamine + H2O = L-glutamate + NH4(+). It catalyses the reaction UTP + NH4(+) + ATP = CTP + ADP + phosphate + 2 H(+). It participates in pyrimidine metabolism; CTP biosynthesis via de novo pathway; CTP from UDP: step 2/2. Allosterically activated by GTP, when glutamine is the substrate; GTP has no effect on the reaction when ammonia is the substrate. The allosteric effector GTP functions by stabilizing the protein conformation that binds the tetrahedral intermediate(s) formed during glutamine hydrolysis. Inhibited by the product CTP, via allosteric rather than competitive inhibition. Its function is as follows. Catalyzes the ATP-dependent amination of UTP to CTP with either L-glutamine or ammonia as the source of nitrogen. Regulates intracellular CTP levels through interactions with the four ribonucleotide triphosphates. The sequence is that of CTP synthase from Chlorobaculum tepidum (strain ATCC 49652 / DSM 12025 / NBRC 103806 / TLS) (Chlorobium tepidum).